A 275-amino-acid polypeptide reads, in one-letter code: MSTNPATNSESLDILGRYVSAGPGFSPGVRALLFKLLGGKTLNTLTPEELRFSHLVVSKMYELGLNVFLLREAVANCGVTDAVILERKVPVEFWKILFDGCVALGVKEDMLLSEAGRSQLWLHLNKNPQLLKGLAGYVLRRLGLCQHVKVHPQNLLDGNFLFNLGSVFSCRLLMVAAFCLLFWGRPEVEPWVRTFVTKIYVLYLIIVGALRINFSVFELSTQNGYCGILEAICSDLMAVAGHGGEGSRERQWHAWLDYLFIFNNNVVLHNSNRDG.

It belongs to the herpesviridae UL79 family.

The polypeptide is Gene 18 protein (18) (Connochaetes taurinus (Blue wildebeest)).